We begin with the raw amino-acid sequence, 367 residues long: Glutamate 5-kinase (367 aa).

ATP is bound at residue lysine 10. Serine 50, aspartate 137, and asparagine 149 together coordinate substrate. Residues 169-170 and 211-217 contribute to the ATP site; these read TD and TGGMSTK. The region spanning 275 to 353 is the PUA domain; the sequence is AGEITVDEGA…QEIDAILGYE (79 aa).

Belongs to the glutamate 5-kinase family.

The protein localises to the cytoplasm. The enzyme catalyses L-glutamate + ATP = L-glutamyl 5-phosphate + ADP. It functions in the pathway amino-acid biosynthesis; L-proline biosynthesis; L-glutamate 5-semialdehyde from L-glutamate: step 1/2. Functionally, catalyzes the transfer of a phosphate group to glutamate to form L-glutamate 5-phosphate. This Escherichia coli O81 (strain ED1a) protein is Glutamate 5-kinase.